The following is a 44-amino-acid chain: Relaxin (44 aa).

Position 1 is a pyrrolidone carboxylic acid (glutamine 1). 3 disulfides stabilise this stretch: cysteine 3/cysteine 31, cysteine 15/cysteine 44, and cysteine 30/cysteine 35.

Belongs to the insulin family. As to quaternary structure, heterodimer of a B chain and an A chain linked by two disulfide bonds.

The protein resides in the secreted. This Carcharias taurus (Sand tiger shark) protein is Relaxin.